Reading from the N-terminus, the 246-residue chain is Outer membrane protein assembly factor BamD (246 aa).

Residues 1–22 form the signal peptide; sequence MKKKNSIIFVFMILFFNSTVQS.

Belongs to the BamD family. As to quaternary structure, part of the Bam complex.

It is found in the cell outer membrane. Functionally, part of the outer membrane protein assembly complex, which is involved in assembly and insertion of beta-barrel proteins into the outer membrane. The protein is Outer membrane protein assembly factor BamD of Buchnera aphidicola subsp. Acyrthosiphon pisum (strain APS) (Acyrthosiphon pisum symbiotic bacterium).